Here is a 176-residue protein sequence, read N- to C-terminus: Oleosin Ara h 14.0101 (176 aa).

An N-acetylalanine; alternate modification is found at A2. The next 2 membrane-spanning stretches (helical) occupy residues I50 to I80 and A95 to L117. The interval T157–S176 is disordered.

This sequence belongs to the oleosin family. As to quaternary structure, homodimer. Forms oligomers. In terms of tissue distribution, expressed in seeds (at protein level). Not expressed in leaves.

Its subcellular location is the lipid droplet. It is found in the membrane. Functionally, may have a structural role to stabilize the lipid body during desiccation of the seed by preventing coalescence of the oil. Probably interacts with both lipid and phospholipid moieties of lipid bodies. May also provide recognition signals for specific lipase anchorage in lipolysis during seedling growth. This chain is Oleosin Ara h 14.0101, found in Arachis hypogaea (Peanut).